A 204-amino-acid chain; its full sequence is FMN-dependent NADH:quinone oxidoreductase (204 aa).

FMN-binding positions include S9, 15-17, 95-98, and 139-142; these read SVS, MYNF, and SRGG.

It belongs to the azoreductase type 1 family. Homodimer. FMN is required as a cofactor.

The enzyme catalyses 2 a quinone + NADH + H(+) = 2 a 1,4-benzosemiquinone + NAD(+). It catalyses the reaction N,N-dimethyl-1,4-phenylenediamine + anthranilate + 2 NAD(+) = 2-(4-dimethylaminophenyl)diazenylbenzoate + 2 NADH + 2 H(+). Its function is as follows. Quinone reductase that provides resistance to thiol-specific stress caused by electrophilic quinones. Functionally, also exhibits azoreductase activity. Catalyzes the reductive cleavage of the azo bond in aromatic azo compounds to the corresponding amines. The sequence is that of FMN-dependent NADH:quinone oxidoreductase from Methylocella silvestris (strain DSM 15510 / CIP 108128 / LMG 27833 / NCIMB 13906 / BL2).